The chain runs to 597 residues: Probable translation initiation factor IF-2 (597 aa).

The tr-type G domain occupies 10-226 (LRTPIVAVLG…LMGLSQRFMK (217 aa)). The tract at residues 19–26 (GHVDHGKT) is G1. Position 19–26 (19–26 (GHVDHGKT)) interacts with GTP. The interval 44–48 (AITQH) is G2. The segment at 81 to 84 (DTPG) is G3. GTP is bound by residues 81-85 (DTPGH) and 135-138 (NKVD). The G4 stretch occupies residues 135-138 (NKVD). Positions 203–205 (SAI) are G5.

It belongs to the TRAFAC class translation factor GTPase superfamily. Classic translation factor GTPase family. IF-2 subfamily.

Functionally, function in general translation initiation by promoting the binding of the formylmethionine-tRNA to ribosomes. Seems to function along with eIF-2. This is Probable translation initiation factor IF-2 from Halorubrum lacusprofundi (strain ATCC 49239 / DSM 5036 / JCM 8891 / ACAM 34).